The following is a 110-amino-acid chain: NADH-quinone oxidoreductase subunit K (110 aa).

The next 3 membrane-spanning stretches (helical) occupy residues 13–33 (VTHG…GIII), 38–58 (ILIL…NFLI), and 70–90 (VFVF…LAIV).

The protein belongs to the complex I subunit 4L family. NDH-1 is composed of 14 different subunits. Subunits NuoA, H, J, K, L, M, N constitute the membrane sector of the complex.

The protein localises to the cell inner membrane. It catalyses the reaction a quinone + NADH + 5 H(+)(in) = a quinol + NAD(+) + 4 H(+)(out). Its function is as follows. NDH-1 shuttles electrons from NADH, via FMN and iron-sulfur (Fe-S) centers, to quinones in the respiratory chain. The immediate electron acceptor for the enzyme in this species is believed to be ubiquinone. Couples the redox reaction to proton translocation (for every two electrons transferred, four hydrogen ions are translocated across the cytoplasmic membrane), and thus conserves the redox energy in a proton gradient. This Francisella tularensis subsp. holarctica (strain FTNF002-00 / FTA) protein is NADH-quinone oxidoreductase subunit K.